A 224-amino-acid chain; its full sequence is Superoxide dismutase [Mn], mitochondrial (224 aa).

The N-terminal 20 residues, 1–20, are a transit peptide targeting the mitochondrion; the sequence is MLLARAFARRSLRAGLWCRQ. 4 residues coordinate Mn(2+): His-46, His-94, Asp-177, and His-181.

This sequence belongs to the iron/manganese superoxide dismutase family. Homotetramer. The cofactor is Mn(2+).

It is found in the mitochondrion matrix. It carries out the reaction 2 superoxide + 2 H(+) = H2O2 + O2. Its function is as follows. Destroys superoxide anion radicals which are normally produced within the cells and which are toxic to biological systems. This chain is Superoxide dismutase [Mn], mitochondrial, found in Charybdis feriata (Crucifix crab).